The sequence spans 273 residues: 4-hydroxy-tetrahydrodipicolinate reductase (273 aa).

Residues 12–17 (GAGGRM) and glutamate 38 contribute to the NAD(+) site. Residue arginine 39 coordinates NADP(+). NAD(+) contacts are provided by residues 102-104 (GTT) and 126-129 (AANF). Catalysis depends on histidine 159, which acts as the Proton donor/acceptor. Histidine 160 contacts (S)-2,3,4,5-tetrahydrodipicolinate. Lysine 163 serves as the catalytic Proton donor. Residue 169–170 (GT) participates in (S)-2,3,4,5-tetrahydrodipicolinate binding.

The protein belongs to the DapB family. Homotetramer.

The protein localises to the cytoplasm. It catalyses the reaction (S)-2,3,4,5-tetrahydrodipicolinate + NAD(+) + H2O = (2S,4S)-4-hydroxy-2,3,4,5-tetrahydrodipicolinate + NADH + H(+). The catalysed reaction is (S)-2,3,4,5-tetrahydrodipicolinate + NADP(+) + H2O = (2S,4S)-4-hydroxy-2,3,4,5-tetrahydrodipicolinate + NADPH + H(+). The protein operates within amino-acid biosynthesis; L-lysine biosynthesis via DAP pathway; (S)-tetrahydrodipicolinate from L-aspartate: step 4/4. Catalyzes the conversion of 4-hydroxy-tetrahydrodipicolinate (HTPA) to tetrahydrodipicolinate. In Enterobacter sp. (strain 638), this protein is 4-hydroxy-tetrahydrodipicolinate reductase.